The following is a 367-amino-acid chain: Alanine racemase (367 aa).

K40 serves as the catalytic Proton acceptor; specific for D-alanine. K40 bears the N6-(pyridoxal phosphate)lysine mark. R136 contacts substrate. Residue Y263 is the Proton acceptor; specific for L-alanine of the active site. M310 provides a ligand contact to substrate.

This sequence belongs to the alanine racemase family. Pyridoxal 5'-phosphate is required as a cofactor.

The enzyme catalyses L-alanine = D-alanine. It participates in amino-acid biosynthesis; D-alanine biosynthesis; D-alanine from L-alanine: step 1/1. Its function is as follows. Catalyzes the interconversion of L-alanine and D-alanine. May also act on other amino acids. The protein is Alanine racemase (alr) of Streptococcus pneumoniae (strain 70585).